The chain runs to 392 residues: METSKEKTITSPGPYIVRLLNSSLNGCEFPLLTGRTLFVVGQSDALTASGQLPDIPADSFFIPLDHGGVNFEIQVDTDATEIILHELKEGNSESRSVQLNTPIQVGELLILIRPESEPWVPEQPEKLETSAKKNEPRFKNGIVAALAGFFILGIGTVGTLWILNSPQRQAAELDSLLGQEKERFQVLPGRDKMLYVAAQNERDTLWARQVLARGDYDKNARVINENEENKRISIWLDTYYPQLAYYRIHFDEPRKPVFWLSRQRNTMSKKELEVLSQKLRALMPYADSVNITLMDDVTAAGQAEAGLKQQALPYSRRNHKGGVTFVIQGALDDVEILRARQFVDSYYRTWGGRYVQFAIELKDDWLKGRSFQYGAEGYIKMSPGHWYFPSPL.

Residues 142 to 162 form a helical membrane-spanning segment; that stretch reads IVAALAGFFILGIGTVGTLWI.

The protein localises to the cell membrane. Functionally, required for invasion of epithelial cells. The chain is Protein PrgH (prgH) from Salmonella typhimurium (strain LT2 / SGSC1412 / ATCC 700720).